A 594-amino-acid polypeptide reads, in one-letter code: Isocitrate dehydrogenase kinase/phosphatase (594 aa).

ATP is bound by residues 315-321 and K336; that span reads APGIRGM. The active site involves D371.

The protein belongs to the AceK family.

The protein resides in the cytoplasm. The catalysed reaction is L-seryl-[isocitrate dehydrogenase] + ATP = O-phospho-L-seryl-[isocitrate dehydrogenase] + ADP + H(+). Its function is as follows. Bifunctional enzyme which can phosphorylate or dephosphorylate isocitrate dehydrogenase (IDH) on a specific serine residue. This is a regulatory mechanism which enables bacteria to bypass the Krebs cycle via the glyoxylate shunt in response to the source of carbon. When bacteria are grown on glucose, IDH is fully active and unphosphorylated, but when grown on acetate or ethanol, the activity of IDH declines drastically concomitant with its phosphorylation. The sequence is that of Isocitrate dehydrogenase kinase/phosphatase from Klebsiella pneumoniae subsp. pneumoniae (strain ATCC 700721 / MGH 78578).